A 96-amino-acid polypeptide reads, in one-letter code: CLAVATA3/ESR (CLE)-related protein 43 (96 aa).

The signal sequence occupies residues Met-1–Gly-28. The segment at Phe-71–Asn-96 is disordered. N-linked (GlcNAc...) asparagine glycosylation is present at Asn-74. Hydroxyproline occurs at positions 88 and 91. Residue Pro-91 is glycosylated (O-linked (Ara...) hydroxyproline).

This sequence belongs to the CLV3/ESR signal peptide family. Post-translationally, the O-glycosylation (arabinosylation) of the hydroxyproline Pro-91 enhances binding affinity of the CLE43p peptide for its receptor. Expressed at low levels in seedlings.

Its subcellular location is the secreted. The protein resides in the extracellular space. Its function is as follows. Extracellular signal peptide that regulates cell fate. Promotes pollen tube growth prolongation in a SKM1 and SKM2-dependent manner, especially under relatively high temperature (at 30 degrees Celsius), thus conferring tolerance against high temperature probably through the maintenance of mitochondrial activity. The protein is CLAVATA3/ESR (CLE)-related protein 43 of Arabidopsis thaliana (Mouse-ear cress).